Reading from the N-terminus, the 133-residue chain is ATP synthase epsilon chain (133 aa).

It belongs to the ATPase epsilon chain family. As to quaternary structure, F-type ATPases have 2 components, CF(1) - the catalytic core - and CF(0) - the membrane proton channel. CF(1) has five subunits: alpha(3), beta(3), gamma(1), delta(1), epsilon(1). CF(0) has three main subunits: a, b and c.

Its subcellular location is the cellular thylakoid membrane. Functionally, produces ATP from ADP in the presence of a proton gradient across the membrane. This is ATP synthase epsilon chain from Prochlorococcus marinus (strain MIT 9303).